The sequence spans 138 residues: Acidic phospholipase A2 Cvv-E6e (138 aa).

A signal peptide spans 1 to 16 (MRTLWILAVLLLGVEG). 7 disulfide bridges follow: C42-C131, C44-C60, C59-C111, C65-C138, C66-C104, C73-C97, and C91-C102. Residues Y43, G45, and G47 each contribute to the Ca(2+) site. Residue H63 is part of the active site. D64 is a binding site for Ca(2+). Residue D105 is part of the active site.

Ca(2+) is required as a cofactor. In terms of tissue distribution, expressed by the venom gland.

The protein resides in the secreted. The enzyme catalyses a 1,2-diacyl-sn-glycero-3-phosphocholine + H2O = a 1-acyl-sn-glycero-3-phosphocholine + a fatty acid + H(+). Snake venom phospholipase A2 (PLA2) that significantly inhibits ADP-induced platelet aggregation in platelet-rich plasma of human, rabbit and guinea pig. PLA2 catalyzes the calcium-dependent hydrolysis of the 2-acyl groups in 3-sn-phosphoglycerides. The sequence is that of Acidic phospholipase A2 Cvv-E6e from Crotalus viridis viridis (Prairie rattlesnake).